A 565-amino-acid chain; its full sequence is Proline--tRNA ligase (565 aa).

This sequence belongs to the class-II aminoacyl-tRNA synthetase family. ProS type 1 subfamily. In terms of assembly, homodimer.

Its subcellular location is the cytoplasm. It catalyses the reaction tRNA(Pro) + L-proline + ATP = L-prolyl-tRNA(Pro) + AMP + diphosphate. Catalyzes the attachment of proline to tRNA(Pro) in a two-step reaction: proline is first activated by ATP to form Pro-AMP and then transferred to the acceptor end of tRNA(Pro). As ProRS can inadvertently accommodate and process non-cognate amino acids such as alanine and cysteine, to avoid such errors it has two additional distinct editing activities against alanine. One activity is designated as 'pretransfer' editing and involves the tRNA(Pro)-independent hydrolysis of activated Ala-AMP. The other activity is designated 'posttransfer' editing and involves deacylation of mischarged Ala-tRNA(Pro). The misacylated Cys-tRNA(Pro) is not edited by ProRS. This Francisella tularensis subsp. tularensis (strain FSC 198) protein is Proline--tRNA ligase.